Consider the following 412-residue polypeptide: FAD-dependent monooxygenase nscC (412 aa).

The first 21 residues, 1–21, serve as a signal peptide directing secretion; it reads MGKPQETILIIGAGIAGLTAS. Positions 35 and 46 each coordinate FAD. N-linked (GlcNAc...) asparagine glycans are attached at residues N68 and N92. Residue R119 participates in FAD binding. N-linked (GlcNAc...) asparagine glycosylation is found at N170, N231, and N251. Residues D326 and G339 each contribute to the FAD site.

The protein belongs to the paxM FAD-dependent monooxygenase family. FAD serves as cofactor.

It participates in secondary metabolite biosynthesis. Functionally, FAD-dependent monooxygenase; part of the gene cluster that mediates the biosynthesis of neosartoricin B, a prenylated anthracenone that probably exhibits T-cell antiproliferative activity, suggestive of a physiological role as an immunosuppressive agent. The non-reducing polyketide synthase nscA probably synthesizes and cyclizes the decaketide backbone. The hydrolase nscB then mediates the product release through hydrolysis followed by spontaneous decarboxylation. The prenyltransferase nscD catalyzes the addition of the dimethylallyl group to the aromatic C5. The FAD-dependent monooxygenase nscC is then responsible for the stereospecific hydroxylation at C2. Neosartoricin B can be converted into two additional compounds neosartoricins C and D. Neosartoricin C is a spirocyclic compound that is cyclized through the attack of C3 hydroxyl on C14, followed by dehydration. On the other hand, neosartoricin D is a further cyclized compound in which attack of C2 on C14 in neosartoricin C results in the formation of the acetal-containing dioxabicyclo-octanone ring. Both of these compounds are novel and possibly represent related metabolites of the gene cluster. The protein is FAD-dependent monooxygenase nscC of Trichophyton rubrum (strain ATCC MYA-4607 / CBS 118892) (Athlete's foot fungus).